Consider the following 493-residue polypeptide: Probable mannosyl-oligosaccharide alpha-1,2-mannosidase 1B (493 aa).

A signal peptide spans 1 to 18 (MHLPSLSVALALVSSSLA). Residues Asn-87 and Asn-174 are each glycosylated (N-linked (GlcNAc...) asparagine). Residues Cys-324 and Cys-353 are joined by a disulfide bond. The active-site Proton donor is the Glu-367. Asn-489 carries an N-linked (GlcNAc...) asparagine glycan.

It belongs to the glycosyl hydrolase 47 family. In terms of assembly, monomer. Ca(2+) is required as a cofactor. The cofactor is Mg(2+).

Its subcellular location is the cytoplasmic vesicle lumen. The catalysed reaction is N(4)-(alpha-D-Man-(1-&gt;2)-alpha-D-Man-(1-&gt;2)-alpha-D-Man-(1-&gt;3)-[alpha-D-Man-(1-&gt;2)-alpha-D-Man-(1-&gt;3)-[alpha-D-Man-(1-&gt;2)-alpha-D-Man-(1-&gt;6)]-alpha-D-Man-(1-&gt;6)]-beta-D-Man-(1-&gt;4)-beta-D-GlcNAc-(1-&gt;4)-beta-D-GlcNAc)-L-asparaginyl-[protein] (N-glucan mannose isomer 9A1,2,3B1,2,3) + 4 H2O = N(4)-(alpha-D-Man-(1-&gt;3)-[alpha-D-Man-(1-&gt;3)-[alpha-D-Man-(1-&gt;6)]-alpha-D-Man-(1-&gt;6)]-beta-D-Man-(1-&gt;4)-beta-D-GlcNAc-(1-&gt;4)-beta-D-GlcNAc)-L-asparaginyl-[protein] (N-glucan mannose isomer 5A1,2) + 4 beta-D-mannose. It carries out the reaction N(4)-(alpha-D-Man-(1-&gt;2)-alpha-D-Man-(1-&gt;2)-alpha-D-Man-(1-&gt;3)-[alpha-D-Man-(1-&gt;3)-[alpha-D-Man-(1-&gt;2)-alpha-D-Man-(1-&gt;6)]-alpha-D-Man-(1-&gt;6)]-beta-D-Man-(1-&gt;4)-beta-D-GlcNAc-(1-&gt;4)-beta-D-GlcNAc)-L-asparaginyl-[protein] (N-glucan mannose isomer 8A1,2,3B1,3) + 3 H2O = N(4)-(alpha-D-Man-(1-&gt;3)-[alpha-D-Man-(1-&gt;3)-[alpha-D-Man-(1-&gt;6)]-alpha-D-Man-(1-&gt;6)]-beta-D-Man-(1-&gt;4)-beta-D-GlcNAc-(1-&gt;4)-beta-D-GlcNAc)-L-asparaginyl-[protein] (N-glucan mannose isomer 5A1,2) + 3 beta-D-mannose. Its pathway is protein modification; protein glycosylation. In terms of biological role, involved in the maturation of Asn-linked oligosaccharides. Progressively trims alpha-1,2-linked mannose residues from Man(9)GlcNAc(2) to produce Man(5)GlcNAc(2). This chain is Probable mannosyl-oligosaccharide alpha-1,2-mannosidase 1B (mns1B), found in Neosartorya fischeri (strain ATCC 1020 / DSM 3700 / CBS 544.65 / FGSC A1164 / JCM 1740 / NRRL 181 / WB 181) (Aspergillus fischerianus).